Reading from the N-terminus, the 337-residue chain is 4-hydroxyproline 2-epimerase (337 aa).

Cys91 acts as the Proton acceptor in catalysis. Substrate is bound by residues 92–93 (GH), Asp252, and 257–258 (GT).

It belongs to the proline racemase family.

It catalyses the reaction trans-4-hydroxy-L-proline = cis-4-hydroxy-D-proline. Catalyzes the epimerization of trans-4-hydroxy-L-proline (t4LHyp) to cis-4-hydroxy-D-proline (c4DHyp). Is involved in a degradation pathway that converts t4LHyp to alpha-ketoglutarate, which allows R.sphaeroides to grow on t4LHyp as a sole carbon source. Displays no proline racemase activity. The chain is 4-hydroxyproline 2-epimerase from Cereibacter sphaeroides (strain ATCC 17023 / DSM 158 / JCM 6121 / CCUG 31486 / LMG 2827 / NBRC 12203 / NCIMB 8253 / ATH 2.4.1.) (Rhodobacter sphaeroides).